Reading from the N-terminus, the 380-residue chain is Cytochrome b (380 aa).

4 helical membrane-spanning segments follow: residues 33-53 (FGSLLGICLMVQIITGLFLAM), 77-98 (WLIRYAHANGASMFFICLFIHV), 113-133 (WNIGIILLLTTMATAFVGYVL), and 178-198 (FFAFHFILPFIITALVLVHLL). Residues His-83 and His-97 each contribute to the heme b site. Heme b is bound by residues His-182 and His-196. His-201 serves as a coordination point for a ubiquinone. The next 4 membrane-spanning stretches (helical) occupy residues 226–246 (IKDILGVLLLLMVLMFLVLFF), 288–308 (LGGVLALLLSILILAAFPLLN), 320–340 (ITQTLYWIFVANLLILTWIGG), and 347–367 (FTTIGQISSIMYFMIIVIFMP).

Belongs to the cytochrome b family. The cytochrome bc1 complex contains 11 subunits: 3 respiratory subunits (MT-CYB, CYC1 and UQCRFS1), 2 core proteins (UQCRC1 and UQCRC2) and 6 low-molecular weight proteins (UQCRH/QCR6, UQCRB/QCR7, UQCRQ/QCR8, UQCR10/QCR9, UQCR11/QCR10 and a cleavage product of UQCRFS1). This cytochrome bc1 complex then forms a dimer. Heme b serves as cofactor.

The protein localises to the mitochondrion inner membrane. In terms of biological role, component of the ubiquinol-cytochrome c reductase complex (complex III or cytochrome b-c1 complex) that is part of the mitochondrial respiratory chain. The b-c1 complex mediates electron transfer from ubiquinol to cytochrome c. Contributes to the generation of a proton gradient across the mitochondrial membrane that is then used for ATP synthesis. The protein is Cytochrome b (MT-CYB) of Microryzomys minutus (Forest small rice rat).